The following is a 213-amino-acid chain: Ribosomal RNA small subunit methyltransferase G (213 aa).

S-adenosyl-L-methionine-binding positions include G75, F80, 128–129, and R144; that span reads IE.

This sequence belongs to the methyltransferase superfamily. RNA methyltransferase RsmG family.

The protein localises to the cytoplasm. The catalysed reaction is guanosine(527) in 16S rRNA + S-adenosyl-L-methionine = N(7)-methylguanosine(527) in 16S rRNA + S-adenosyl-L-homocysteine. Its function is as follows. Specifically methylates the N7 position of guanine in position 527 of 16S rRNA. This is Ribosomal RNA small subunit methyltransferase G from Brucella suis biovar 1 (strain 1330).